A 647-amino-acid polypeptide reads, in one-letter code: Chaperone protein DnaK (647 aa).

Thr198 carries the post-translational modification Phosphothreonine; by autocatalysis. Residues 606-634 (GASAEGMDPNQFQQGADNAGESNQADDDV) form a disordered region. The span at 615–628 (NQFQQGADNAGESN) shows a compositional bias: polar residues.

It belongs to the heat shock protein 70 family.

Acts as a chaperone. The chain is Chaperone protein DnaK from Psychrobacter cryohalolentis (strain ATCC BAA-1226 / DSM 17306 / VKM B-2378 / K5).